The sequence spans 360 residues: Cytokine receptor-like factor 2 (360 aa).

Positions 1–18 (MRAVTWAIVAMLLPRVLG) are cleaved as a signal peptide. The Extracellular portion of the chain corresponds to 27 to 238 (TGGVGDTLSV…PRTPGTPTPP (212 aa)). An N-linked (GlcNAc...) asparagine glycan is attached at Asn62. Cys77 and Cys90 are joined by a disulfide. A Fibronectin type-III domain is found at 123 to 214 (RPRPPWNVTL…PSKWTGVASL (92 aa)). N-linked (GlcNAc...) asparagine glycans are attached at residues Asn129 and Asn174. A disulfide bridge links Cys185 with Cys223. The WSXWS motif signature appears at 205-209 (PSKWT). Residues 239 to 259 (LALACGLAVALLTLVLLLALL) traverse the membrane as a helical segment. The Cytoplasmic portion of the chain corresponds to 260 to 360 (RMRRVKEALL…LMGDSGYTTL (101 aa)). The Box 1 motif motif lies at 268-276 (LLPGVPDPR).

It belongs to the type I cytokine receptor family. Type 5 subfamily. Heterodimer of CRLF2 and IL7R. As to expression, expressed in all tissues examined including brain, thymus, lung, heart, muscle, stomach, small intestine, liver, kidney, spleen, testis and skin. Highest levels in thymus, liver and testis.

The protein resides in the membrane. Functionally, receptor for thymic stromal lymphopoietin (TSLP). Forms a functional complex with TSLP and IL7R which is capable of stimulating cell proliferation through activation of STAT3 and STAT5. Also activates JAK2. Implicated in the development of the hematopoietic system. This is Cytokine receptor-like factor 2 (Crlf2) from Rattus norvegicus (Rat).